Here is a 390-residue protein sequence, read N- to C-terminus: Protein phosphatase methylesterase 1 (390 aa).

The segment at 19 to 50 is disordered; sequence FGLSSLSEDPDESESNSNYFSPTPQPPNELRT. The 233-residue stretch at 100 to 332 folds into the AB hydrolase-1 domain; it reads PIFICHHGAG…NLIIGQMQGK (233 aa). Catalysis depends on residues Ser-186, Asp-213, and His-346.

This sequence belongs to the AB hydrolase superfamily.

The catalysed reaction is [phosphatase 2A protein]-C-terminal L-leucine methyl ester + H2O = [phosphatase 2A protein]-C-terminal L-leucine + methanol + H(+). In terms of biological role, demethylates proteins that have been reversibly carboxymethylated. Demethylates the phosphatase PP2A catalytic subunit. The polypeptide is Protein phosphatase methylesterase 1 (PPE1) (Debaryomyces hansenii (strain ATCC 36239 / CBS 767 / BCRC 21394 / JCM 1990 / NBRC 0083 / IGC 2968) (Yeast)).